The primary structure comprises 129 residues: Small ribosomal subunit protein uS11 (129 aa).

Belongs to the universal ribosomal protein uS11 family. In terms of assembly, part of the 30S ribosomal subunit. Interacts with proteins S7 and S18. Binds to IF-3.

Functionally, located on the platform of the 30S subunit, it bridges several disparate RNA helices of the 16S rRNA. Forms part of the Shine-Dalgarno cleft in the 70S ribosome. The chain is Small ribosomal subunit protein uS11 from Bacteroides thetaiotaomicron (strain ATCC 29148 / DSM 2079 / JCM 5827 / CCUG 10774 / NCTC 10582 / VPI-5482 / E50).